Here is a 130-residue protein sequence, read N- to C-terminus: Large ribosomal subunit protein bL12 (130 aa).

The protein belongs to the bacterial ribosomal protein bL12 family. As to quaternary structure, homodimer. Part of the ribosomal stalk of the 50S ribosomal subunit. Forms a multimeric L10(L12)X complex, where L10 forms an elongated spine to which 2 to 4 L12 dimers bind in a sequential fashion. Binds GTP-bound translation factors.

Its function is as follows. Forms part of the ribosomal stalk which helps the ribosome interact with GTP-bound translation factors. Is thus essential for accurate translation. The sequence is that of Large ribosomal subunit protein bL12 from Synechococcus sp. (strain WH7803).